The primary structure comprises 122 residues: Large ribosomal subunit protein uL14 (122 aa).

It belongs to the universal ribosomal protein uL14 family. Part of the 50S ribosomal subunit. Forms a cluster with proteins L3 and L19. In the 70S ribosome, L14 and L19 interact and together make contacts with the 16S rRNA in bridges B5 and B8.

Binds to 23S rRNA. Forms part of two intersubunit bridges in the 70S ribosome. The protein is Large ribosomal subunit protein uL14 of Malacoplasma penetrans (strain HF-2) (Mycoplasma penetrans).